Consider the following 739-residue polypeptide: Polyribonucleotide nucleotidyltransferase (739 aa).

Mg(2+) contacts are provided by Asp489 and Asp495. Residues 556–615 (PKIDTIKIDVDKIKIVIGKGGETIDKIIAETGVKIDIDEDGLVAIFSPDRAAIERTKEII) enclose the KH domain. An S1 motif domain is found at 625–693 (DEVFQAKVVR…DKGRIDASMK (69 aa)). Residues 699–739 (PEGYVEPEKRERSEKPRRHKEHKEKKDNNFGEFKFHKVDKK) are disordered. Residues 722 to 739 (EKKDNNFGEFKFHKVDKK) show a composition bias toward basic and acidic residues.

It belongs to the polyribonucleotide nucleotidyltransferase family. Requires Mg(2+) as cofactor.

Its subcellular location is the cytoplasm. It carries out the reaction RNA(n+1) + phosphate = RNA(n) + a ribonucleoside 5'-diphosphate. Involved in mRNA degradation. Catalyzes the phosphorolysis of single-stranded polyribonucleotides processively in the 3'- to 5'-direction. In Streptococcus suis (strain 98HAH33), this protein is Polyribonucleotide nucleotidyltransferase.